A 426-amino-acid chain; its full sequence is Protein prenyltransferase alpha subunit repeat-containing protein 1 (426 aa).

4 PFTA repeats span residues 86 to 119 (ALVD…VLNP), 121 to 154 (KDLY…QKEC), 180 to 213 (EEMR…AKGN), and 219 to 252 (DELS…AKEL). A disordered region spans residues 255 to 279 (AAEKDVHTSQQPNGENTATASDDNH). A compositionally biased stretch (polar residues) spans 262 to 275 (TSQQPNGENTATAS). One copy of the PFTA 5 repeat lies at 290-323 (EEIQLCTDLIESYPGHETLWCHRRHVFYLWHQWR).

Belongs to the protein prenyltransferase subunit alpha family.

This Danio rerio (Zebrafish) protein is Protein prenyltransferase alpha subunit repeat-containing protein 1 (ptar1).